The following is a 685-amino-acid chain: Kinesin-like protein KIP2 (685 aa).

Disordered regions lie at residues 11–46 (EHVG…GPAQ) and 63–101 (SRPS…SGAS). The segment covering 86–101 (GSPQSPDAPSSASGAS) has biased composition (low complexity). Positions 113–446 (NVSVAIRIKP…VRFASRAKNI (334 aa)) constitute a Kinesin motor domain. Residue 185 to 192 (GMTGSGKT) participates in ATP binding. 2 coiled-coil regions span residues 464–486 (IIQN…RRSA) and 520–663 (LEVE…SALS). The interval 485-510 (SAAAPSGNGSTSPLDSPGVGGTSLSE) is disordered.

This sequence belongs to the TRAFAC class myosin-kinesin ATPase superfamily. Kinesin family.

The protein resides in the cytoplasm. The protein localises to the cytoskeleton. Its function is as follows. Required for assembly of the mitotic spindle. The sequence is that of Kinesin-like protein KIP2 (KIP2) from Eremothecium gossypii (strain ATCC 10895 / CBS 109.51 / FGSC 9923 / NRRL Y-1056) (Yeast).